Consider the following 370-residue polypeptide: Probable trehalose-phosphate phosphatase 6 (370 aa).

The protein belongs to the trehalose phosphatase family. It depends on a divalent metal cation as a cofactor.

The enzyme catalyses alpha,alpha-trehalose 6-phosphate + H2O = alpha,alpha-trehalose + phosphate. It participates in glycan biosynthesis; trehalose biosynthesis. Functionally, removes the phosphate from trehalose 6-phosphate to produce free trehalose. Trehalose accumulation in plant may improve abiotic stress tolerance. This chain is Probable trehalose-phosphate phosphatase 6 (TPP6), found in Oryza sativa subsp. japonica (Rice).